The primary structure comprises 323 residues: Thymidylate synthase (323 aa).

DUMP is bound by residues Arg21 and 172–173 (RR). Cys192 acts as the Nucleophile in catalysis. Residues 214–217 (RSND), Asn225, and 255–257 (HVY) contribute to the dUMP site. Asp217 is a (6R)-5,10-methylene-5,6,7,8-tetrahydrofolate binding site. Ala322 serves as a coordination point for (6R)-5,10-methylene-5,6,7,8-tetrahydrofolate.

This sequence belongs to the thymidylate synthase family. Bacterial-type ThyA subfamily. In terms of assembly, homodimer.

The protein localises to the cytoplasm. The catalysed reaction is dUMP + (6R)-5,10-methylene-5,6,7,8-tetrahydrofolate = 7,8-dihydrofolate + dTMP. Its pathway is pyrimidine metabolism; dTTP biosynthesis. Its function is as follows. Catalyzes the reductive methylation of 2'-deoxyuridine-5'-monophosphate (dUMP) to 2'-deoxythymidine-5'-monophosphate (dTMP) while utilizing 5,10-methylenetetrahydrofolate (mTHF) as the methyl donor and reductant in the reaction, yielding dihydrofolate (DHF) as a by-product. This enzymatic reaction provides an intracellular de novo source of dTMP, an essential precursor for DNA biosynthesis. This is Thymidylate synthase from Bordetella parapertussis (strain 12822 / ATCC BAA-587 / NCTC 13253).